The sequence spans 63 residues: Cecropin-A1 (63 aa).

The signal sequence occupies residues 1–19 (MNFYNIFVFVALILAITIG). Arg62 carries the arginine amide modification.

The protein belongs to the cecropin family.

The protein resides in the secreted. Its function is as follows. Cecropins have lytic and antibacterial activity against several Gram-positive and Gram-negative bacteria. The protein is Cecropin-A1 (CecA1) of Drosophila simulans (Fruit fly).